Here is a 92-residue protein sequence, read N- to C-terminus: Muscle LIM protein 1 (92 aa).

Residues 11–62 form the LIM zinc-binding domain; it reads CPACGKSVYAAEERVAGGYKFHKTCFKCSMCNKALDSTNCTEHEKELFCKNC. The short motif at 65–70 is the Nuclear localization signal element; the sequence is RKYGPK.

In terms of tissue distribution, in the embryo, expression is restricted to the somatic, visceral, and pharyngeal muscles. Within the somatic musculature, MLP60 is distributed throughout the muscle fibers. There is no expression in cardiac mesoderm or in fat body.

Its subcellular location is the cytoplasm. The protein localises to the nucleus. Its function is as follows. Positive regulator of myogenesis. This Drosophila melanogaster (Fruit fly) protein is Muscle LIM protein 1 (Mlp60A).